Consider the following 681-residue polypeptide: Endopolyphosphatase (681 aa).

The Cytoplasmic segment spans residues 1-23 (MKELQLPEKRKSNTGLSWFPSPR). A helical; Signal-anchor for type II membrane protein transmembrane segment spans residues 24–44 (ILQVFLVLLGAIVAFLSFSAT). Residues 45–681 (SSIISSSPKH…RAFCSSGYED (637 aa)) are Vacuolar-facing. N-linked (GlcNAc...) asparagine glycans are attached at residues Asn-127, Asn-173, Asn-309, and Asn-487. A compositionally biased stretch (basic residues) spans 549–562 (KKKKKGKKGKKNKN). Residues 549-585 (KKKKKGKKGKKNKNSKNWWKTDKTFPKKKPKNLPPGP) form a disordered region.

The protein belongs to the endopolyphosphatase PPN1 family. It depends on a divalent metal cation as a cofactor. Post-translationally, processing by proteases in the vacuole may be required for activation.

The protein localises to the vacuole membrane. It carries out the reaction [phosphate](n+1) + n H2O = (n+1) phosphate + n H(+). In terms of biological role, catalyzes the hydrolysis of inorganic polyphosphate (polyP) chains of many hundreds of phosphate residues into shorter lengths. This chain is Endopolyphosphatase (PPN1), found in Kluyveromyces lactis (strain ATCC 8585 / CBS 2359 / DSM 70799 / NBRC 1267 / NRRL Y-1140 / WM37) (Yeast).